A 459-amino-acid chain; its full sequence is MFRYDQVAHLTDQAYIDDLCDRVEQGLDQGLLPSHVFRDERVFKVEMDRIFTRAWVFVAHETEIPKSGDFVLRKVGLDQVIVTRSAGGAINVLLNHCRHRGTEVCHEDSGNTTHFKCPYHGWIYKNDGDFVGAPAMREAYGGRLDSKKNGLLRAPQVESYHGFIFTCLSESGPSLSEYLGDVSWMLDAIVKLHPAGLKVLGAPERFIIRTDWKIGAENFAGDVYHIATAHLSVNETKYISQDMRDTLKTGGGYRFQNGHGFITHRSSEMVGAEGGLWAYGLNPEIRKQFDLEGFDDAQKKMLLEAPPVAGNIFPNFSYLRGALPANAGDLPVVFTNFRLWQPVEPGVMEVWNWQFSYDALPDEYNREAYAAGQLAFSAAGLFDQDDSAVWEGVAKLGGSPWGRKEEVMLHYGQQRVEPDSTYEGKGDYFPSTFGEFNQENFWREWVKQLRSDVRNEVPA.

Residues 55 to 166 form the Rieske domain; the sequence is WVFVAHETEI…VESYHGFIFT (112 aa). Residues C97, H99, C117, and H120 each contribute to the [2Fe-2S] cluster site. Residues H225, H230, and D386 each contribute to the Fe cation site.

Belongs to the bacterial ring-hydroxylating dioxygenase alpha subunit family. In terms of assembly, pdmA (subunit alpha) and PdmB (subunit beta) form the oxygenase component of a bacterial Rieske non-heme iron oxygenase (RO) system. Requires [2Fe-2S] cluster as cofactor. The cofactor is Fe cation.

The catalysed reaction is a 1,1-dimethyl-3-phenylurea + 2 reduced [2Fe-2S]-[ferredoxin] + O2 + 2 H(+) = a 1-methyl-3-phenylurea + formaldehyde + 2 oxidized [2Fe-2S]-[ferredoxin] + H2O. The enzyme catalyses isoproturon + 2 reduced [2Fe-2S]-[ferredoxin] + O2 + 2 H(+) = 1-methyl-3-[4-(propan-2-yl)phenyl]urea + formaldehyde + 2 oxidized [2Fe-2S]-[ferredoxin] + H2O. It catalyses the reaction chlorotoluron + 2 reduced [2Fe-2S]-[ferredoxin] + O2 + 2 H(+) = 3-(3-chloro-4-methylphenyl)-1-methylurea + formaldehyde + 2 oxidized [2Fe-2S]-[ferredoxin] + H2O. It carries out the reaction metoxuron + 2 reduced [2Fe-2S]-[ferredoxin] + O2 + 2 H(+) = 3-(3-chloro-4-methoxylphenyl)-1-methylurea + formaldehyde + 2 oxidized [2Fe-2S]-[ferredoxin] + H2O. The catalysed reaction is monuron + 2 reduced [2Fe-2S]-[ferredoxin] + O2 + 2 H(+) = 3-(4-chlorophenyl)-1-methylurea + formaldehyde + 2 oxidized [2Fe-2S]-[ferredoxin] + H2O. The enzyme catalyses diuron + 2 reduced [2Fe-2S]-[ferredoxin] + O2 + 2 H(+) = 3-(3,4-dichlorophenyl)-1-methylurea + formaldehyde + 2 oxidized [2Fe-2S]-[ferredoxin] + H2O. It catalyses the reaction fluometuron + 2 reduced [2Fe-2S]-[ferredoxin] + O2 + 2 H(+) = 3-[3-(trifluoromethyl)phenyl]-1-methylurea + formaldehyde + 2 oxidized [2Fe-2S]-[ferredoxin] + H2O. It carries out the reaction fenuron + 2 reduced [2Fe-2S]-[ferredoxin] + O2 + 2 H(+) = 1-methyl-3-phenylurea + formaldehyde + 2 oxidized [2Fe-2S]-[ferredoxin] + H2O. Its pathway is xenobiotic degradation. With respect to regulation, activity is stimulated in vitro by coexpression of a [3Fe-4S]-type ferredoxin. In terms of biological role, part of the multicomponent N,N-dimethyl phenylurea N-demethylase responsible for the initial N-demethylation step during the bacterial metabolism of N,N-dimethyl-substituted phenylurea herbicides. Catalyzes the mono-N-demethylation of N,N-dimethyl-substituted phenylurea herbicides to their mono-N-demethylated derivatives. Is active on isoproturon (IPU), chlorotoluron, metoxuron, monoron, diuron, fluometuron and fenuron, but cannot transform the N-methoxy-N-methyl-substituted herbicides. The sequence is that of N,N-dimethyl phenylurea N-demethylase subunit alpha from Sphingobium sp. (strain YBL2).